Consider the following 679-residue polypeptide: Glycine--tRNA ligase beta subunit (679 aa).

The protein belongs to the class-II aminoacyl-tRNA synthetase family. In terms of assembly, tetramer of two alpha and two beta subunits.

The protein localises to the cytoplasm. It carries out the reaction tRNA(Gly) + glycine + ATP = glycyl-tRNA(Gly) + AMP + diphosphate. This is Glycine--tRNA ligase beta subunit from Streptococcus gordonii (strain Challis / ATCC 35105 / BCRC 15272 / CH1 / DL1 / V288).